The chain runs to 183 residues: Apo-citrate lyase phosphoribosyl-dephospho-CoA transferase (183 aa).

This sequence belongs to the CitX family.

It carries out the reaction apo-[citrate lyase ACP] + 2'-(5''-triphospho-alpha-D-ribosyl)-3'-dephospho-CoA = holo-[citrate lyase ACP] + diphosphate. Its function is as follows. Transfers 2-(5''-triphosphoribosyl)-3'-dephosphocoenzyme-A on a serine residue to the apo-acyl carrier protein (gamma chain) of the citrate lyase to yield holo-acyl carrier protein. The chain is Apo-citrate lyase phosphoribosyl-dephospho-CoA transferase from Escherichia coli (strain SMS-3-5 / SECEC).